The chain runs to 178 residues: Beta-lytic metalloendopeptidase (178 aa).

C65 and C111 are joined by a disulfide. Zn(2+)-binding residues include H120 and H122. A disulfide bond links C155 and C168.

This sequence belongs to the peptidase M23A family. Zn(2+) is required as a cofactor.

It carries out the reaction Cleavage of N-acetylmuramoyl-|-Ala, and of the insulin B chain at 23-Gly-|-Phe-24 &gt; 18-Val-|-Cys(SO3H).. The sequence is that of Beta-lytic metalloendopeptidase from Lysobacter enzymogenes.